The sequence spans 69 residues: uncharacterized protein (69 aa).

Over 1 to 15 (MLLYIVIIVACIISK) the chain is Cytoplasmic. Residues 16–36 (LVPNEYWAIHLFFIIMIFMVY) form a helical membrane-spanning segment. The Extracellular segment spans residues 37-69 (MYEKLDIHQKYQFWNYTMSGLSGHNVQITCKCY). An N-linked (GlcNAc...) asparagine; by host glycan is attached at Asn51.

Belongs to the asfivirus X69R family.

Its subcellular location is the host membrane. This is an uncharacterized protein from Ornithodoros (relapsing fever ticks).